The chain runs to 338 residues: Eukaryotic translation initiation factor 3 subunit H (338 aa).

The 133-residue stretch at 22 to 154 (VQCDGLAVMK…LKAYRLTPQA (133 aa)) folds into the MPN domain.

This sequence belongs to the eIF-3 subunit H family. In terms of assembly, component of the eukaryotic translation initiation factor 3 (eIF-3) complex. The eIF-3 complex interacts with pix. Interacts with mxt.

The protein resides in the cytoplasm. Its function is as follows. Component of the eukaryotic translation initiation factor 3 (eIF-3) complex, which is involved in protein synthesis of a specialized repertoire of mRNAs and, together with other initiation factors, stimulates binding of mRNA and methionyl-tRNAi to the 40S ribosome. The eIF-3 complex specifically targets and initiates translation of a subset of mRNAs involved in cell proliferation. The chain is Eukaryotic translation initiation factor 3 subunit H from Drosophila melanogaster (Fruit fly).